The chain runs to 200 residues: FMN-dependent NADH:quinone oxidoreductase (200 aa).

FMN-binding positions include Ser-10 and Met-95–Phe-98.

This sequence belongs to the azoreductase type 1 family. Homodimer. FMN is required as a cofactor.

The enzyme catalyses 2 a quinone + NADH + H(+) = 2 a 1,4-benzosemiquinone + NAD(+). It carries out the reaction N,N-dimethyl-1,4-phenylenediamine + anthranilate + 2 NAD(+) = 2-(4-dimethylaminophenyl)diazenylbenzoate + 2 NADH + 2 H(+). Functionally, quinone reductase that provides resistance to thiol-specific stress caused by electrophilic quinones. In terms of biological role, also exhibits azoreductase activity. Catalyzes the reductive cleavage of the azo bond in aromatic azo compounds to the corresponding amines. The polypeptide is FMN-dependent NADH:quinone oxidoreductase (Alteromonas mediterranea (strain DSM 17117 / CIP 110805 / LMG 28347 / Deep ecotype)).